The chain runs to 477 residues: Bifunctional protein HldE (477 aa).

Residues 1 to 318 (MKVTLPEFER…ENAVRGRADT (318 aa)) are ribokinase. Lys179 bears the N6-acetyllysine mark. 195–198 (NLSE) contributes to the ATP binding site. Residue Asp264 is part of the active site. The segment at 344 to 477 (MTNGVFDILH…IKKIQQDKKG (134 aa)) is cytidylyltransferase.

It in the N-terminal section; belongs to the carbohydrate kinase PfkB family. In the C-terminal section; belongs to the cytidylyltransferase family. In terms of assembly, homodimer.

It carries out the reaction D-glycero-beta-D-manno-heptose 7-phosphate + ATP = D-glycero-beta-D-manno-heptose 1,7-bisphosphate + ADP + H(+). The catalysed reaction is D-glycero-beta-D-manno-heptose 1-phosphate + ATP + H(+) = ADP-D-glycero-beta-D-manno-heptose + diphosphate. It participates in nucleotide-sugar biosynthesis; ADP-L-glycero-beta-D-manno-heptose biosynthesis; ADP-L-glycero-beta-D-manno-heptose from D-glycero-beta-D-manno-heptose 7-phosphate: step 1/4. The protein operates within nucleotide-sugar biosynthesis; ADP-L-glycero-beta-D-manno-heptose biosynthesis; ADP-L-glycero-beta-D-manno-heptose from D-glycero-beta-D-manno-heptose 7-phosphate: step 3/4. Functionally, catalyzes the phosphorylation of D-glycero-D-manno-heptose 7-phosphate at the C-1 position to selectively form D-glycero-beta-D-manno-heptose-1,7-bisphosphate. Its function is as follows. Catalyzes the ADP transfer from ATP to D-glycero-beta-D-manno-heptose 1-phosphate, yielding ADP-D-glycero-beta-D-manno-heptose. The sequence is that of Bifunctional protein HldE from Escherichia coli O9:H4 (strain HS).